We begin with the raw amino-acid sequence, 493 residues long: Monodehydroascorbate reductase, chloroplastic/mitochondrial (493 aa).

The transit peptide at 1–51 directs the protein to the chloroplast and mitochondrion; it reads MSAVRRVMALASTTLPTKSGLSLWCPSSPSLARRFPARFSPIGSRIASRSL. Residues 68 to 71, glutamate 95, arginine 102, lysine 107, and 201 to 202 each bind FAD; these read GGNA and RE. NAD(+) contacts are provided by residues 224–230, glutamate 248, arginine 254, and glycine 313; that span reads GGYIGME. 226–230 lines the NADP(+) pocket; that stretch reads YIGME. Residues arginine 254 and glycine 313 each contribute to the NADP(+) site. Aspartate 351 provides a ligand contact to FAD. An NAD(+)-binding site is contributed by 367–368; it reads EH. 367 to 368 contributes to the NADP(+) binding site; the sequence is EH. Valine 369 provides a ligand contact to FAD. Arginine 373 provides a ligand contact to L-ascorbate. Tyrosine 398 is an FAD binding site. Residue tyrosine 398 coordinates NAD(+). Residue tyrosine 398 participates in NADP(+) binding. Arginine 400 serves as a coordination point for L-ascorbate.

Belongs to the FAD-dependent oxidoreductase family. In terms of assembly, interacts in vitro with TRXy. The cofactor is FAD.

The protein resides in the plastid. The protein localises to the chloroplast. It is found in the mitochondrion. It carries out the reaction 2 monodehydro-L-ascorbate radical + NADH + H(+) = 2 L-ascorbate + NAD(+). It catalyses the reaction 2,4,6-trinitrotoluene + NADH = 2,4,6-trinitrotoluene radical + e(-) + NAD(+). Its activity is regulated as follows. Redox regulation of the activity by thioredoxin TRXy1. Functionally, catalyzes the conversion of monodehydroascorbate (MDA) to ascorbate, oxidizing NADH in the process. Mediates phytotoxicity of 2,4,6-trinitrotoluene (TNT), an explosive and environmental pollutant, by reducing TNT and forming a nitro radical that spontaneously reacts with atmospheric oxygen, generating reactive superoxide. Can also use 1-chloro-2,4-dinitrobenzene (CDNB) as substrate, but not 1-chloro-4-nitrobenzene (CNB). The chain is Monodehydroascorbate reductase, chloroplastic/mitochondrial from Arabidopsis thaliana (Mouse-ear cress).